We begin with the raw amino-acid sequence, 303 residues long: Probable 5-dehydro-4-deoxyglucarate dehydratase (303 aa).

Belongs to the DapA family.

It catalyses the reaction 5-dehydro-4-deoxy-D-glucarate + H(+) = 2,5-dioxopentanoate + CO2 + H2O. Its pathway is carbohydrate acid metabolism; D-glucarate degradation; 2,5-dioxopentanoate from D-glucarate: step 2/2. This is Probable 5-dehydro-4-deoxyglucarate dehydratase from Pseudomonas syringae pv. tomato (strain ATCC BAA-871 / DC3000).